Here is a 214-residue protein sequence, read N- to C-terminus: Protein DEHYDRATION-INDUCED 19 homolog 5 (214 aa).

The residue at position 110 (Ser110) is a Phosphoserine. The disordered stretch occupies residues 148–185; it reads PKKSKLVQPDSSSEASMEDNSLIRDSTEKDWESPSPLS. The segment covering 156 to 166 has biased composition (polar residues); that stretch reads PDSSSEASMED. Basic and acidic residues predominate over residues 168–179; it reads SLIRDSTEKDWE.

The protein belongs to the Di19 family. Phosphorylated in vitro by CPK3 or CPK11. As to expression, expressed in seedlings, roots, leaves, stems, flowers and siliques.

It is found in the nucleus. The protein is Protein DEHYDRATION-INDUCED 19 homolog 5 (DI19-5) of Arabidopsis thaliana (Mouse-ear cress).